The sequence spans 63 residues: Large ribosomal subunit protein bL28 (63 aa).

It belongs to the bacterial ribosomal protein bL28 family.

The chain is Large ribosomal subunit protein bL28 from Geobacter metallireducens (strain ATCC 53774 / DSM 7210 / GS-15).